We begin with the raw amino-acid sequence, 211 residues long: FMN-dependent NADH:quinone oxidoreductase 3 (211 aa).

Residue 102-105 (MWNF) participates in FMN binding.

It belongs to the azoreductase type 1 family. In terms of assembly, homodimer. The cofactor is FMN.

The catalysed reaction is 2 a quinone + NADH + H(+) = 2 a 1,4-benzosemiquinone + NAD(+). The enzyme catalyses N,N-dimethyl-1,4-phenylenediamine + anthranilate + 2 NAD(+) = 2-(4-dimethylaminophenyl)diazenylbenzoate + 2 NADH + 2 H(+). Its function is as follows. Quinone reductase that provides resistance to thiol-specific stress caused by electrophilic quinones. In terms of biological role, also exhibits azoreductase activity. Catalyzes the reductive cleavage of the azo bond in aromatic azo compounds to the corresponding amines. The polypeptide is FMN-dependent NADH:quinone oxidoreductase 3 (Bacillus cereus (strain ZK / E33L)).